The following is a 512-amino-acid chain: Neuronal acetylcholine receptor subunit alpha-3 (512 aa).

Positions 1 to 23 (MNSASRITLFFLLTVLITQECLS) are cleaved as a signal peptide. Residues 24 to 242 (SKGEDRLFRR…PLFYTINLII (219 aa)) are Extracellular-facing. N-linked (GlcNAc...) asparagine glycans are attached at residues asparagine 47 and asparagine 164. Cystine bridges form between cysteine 151-cysteine 165 and cysteine 215-cysteine 216. A helical membrane pass occupies residues 243-258 (PCLLISFLTILVFYLP). Residues 259–260 (SD) lie on the Cytoplasmic side of the membrane. A helical transmembrane segment spans residues 261–277 (CGEKVTLCISVLLSLTV). Residue glutamate 263 participates in Na(+) binding. The Extracellular segment spans residues 278–299 (FLLVITETIPSTSLVIPLIGEY). The chain crosses the membrane as a helical span at residues 300–318 (LLFTMIFVTLSIVITVFVL). The Cytoplasmic portion of the chain corresponds to 319 to 482 (NVHYRTPMTH…EDDWKYVAMV (164 aa)). The interval 356 to 389 (ESSGKGGGEIAGSSGTGGGRGAEGKKMKSSASQQ) is disordered. Gly residues predominate over residues 359-376 (GKGGGEIAGSSGTGGGRG). A helical transmembrane segment spans residues 483 to 501 (IDRIFLWVFVLVCVLGTLG). Over 502 to 512 (LFLQPLIGFFS) the chain is Extracellular.

The protein belongs to the ligand-gated ion channel (TC 1.A.9) family. Acetylcholine receptor (TC 1.A.9.1) subfamily. Alpha-3/CHRNA3 sub-subfamily. As to quaternary structure, neuronal AChR is composed of two different types of subunits: alpha and beta. CHRNA3/Alpha-3 subunit can be combined to CHRNB2/beta-2 or CHRNB4/beta-4 to give rise to functional receptors. In terms of tissue distribution, expressed in retina and brain.

It is found in the synaptic cell membrane. Its subcellular location is the cell membrane. It localises to the endoplasmic reticulum. The protein resides in the golgi apparatus. The catalysed reaction is K(+)(in) = K(+)(out). It catalyses the reaction Na(+)(in) = Na(+)(out). It carries out the reaction Ca(2+)(in) = Ca(2+)(out). Activated by a myriad of ligands such as acetylcholine, cytisine, nicotine, choline and epibatidine. The heteropentamer CHRNA3:CHRNB2 activity is blocked by alpha-conotoxins ImI, ImII, PnIA, GID and MII. The heteropentamer CHRNA3:CHRNB4 activity is blocked by the alpha-conotoxin ImI and AuIB. Its function is as follows. Component of neuronal acetylcholine receptors (nAChRs) that function as pentameric, ligand-gated cation channels with high calcium permeability among other activities. nAChRs are excitatory neurotrasnmitter receptors formed by a collection of nAChR subunits known to mediate synaptic transmission in the nervous system and the neuromuscular junction. Each nAchR subunit confers differential attributes to channel properties, including activation, deactivation and desensitization kinetics, pH sensitivity, cation permeability, and binding to allosteric modulators. CHRNA3 forms heteropentameric neuronal acetylcholine receptors with CHRNB2 and CHRNB4. CHRNA3:CHRNB4 being predominant in neurons of the autonomic ganglia, it is known as ganglionic nicotinic receptor. CHRNA3:CHRNB4 also plays an important role in the habenulo-interpeduncular tract, modulating the mesolimbic dopamine system and affecting reward circuits and addiction. Hypothalamic CHRNA3:CHRNB4 nAChR activation by nicotine leads to activation of POMC neurons and a decrease in food intake. Also expressed in the urothelium where it modulates reflex bladder activity by increasing intracellular calcium through extracellular influx and basal ATP release. The sequence is that of Neuronal acetylcholine receptor subunit alpha-3 (chrna3) from Carassius auratus (Goldfish).